The sequence spans 1043 residues: tRNA wybutosine-synthesizing protein 2/3/4 (1043 aa).

Positions M1–G233 are tRNA wybutosine-synthesizing protein 3 homolog. A disordered region spans residues R53–K75. Kelch repeat units follow at residues D360 to R410, V412 to S460, K461 to D510, and L512 to D559. The interval Q700–R1041 is tRNA wybutosine-synthesizing protein 2 homolog. S-adenosyl-L-methionine is bound by residues K874 and D942–N943.

In the C-terminal section; belongs to the class I-like SAM-binding methyltransferase superfamily. TRM5/TYW2 family. The protein in the N-terminal section; belongs to the TYW3 family.

It carries out the reaction 4-demethyl-7-[(3S)-3-amino-3-carboxypropyl]wyosine(37) in tRNA(Phe) + S-adenosyl-L-methionine = 7-[(3S)-3-amino-3-carboxypropyl]wyosine(37) in tRNA(Phe) + S-adenosyl-L-homocysteine + H(+). The enzyme catalyses 4-demethylwyosine(37) in tRNA(Phe) + S-adenosyl-L-methionine = 4-demethyl-7-[(3S)-3-amino-3-carboxypropyl]wyosine(37) in tRNA(Phe) + S-methyl-5'-thioadenosine + H(+). Its pathway is tRNA modification; wybutosine-tRNA(Phe) biosynthesis. Functionally, S-adenosyl-L-methionine-dependent transferase that acts as a component of the wybutosine biosynthesis pathway. Wybutosine is a hyper modified guanosine with a tricyclic base found at the 3'-position adjacent to the anticodon of eukaryotic phenylalanine tRNA. In Oryza sativa subsp. japonica (Rice), this protein is tRNA wybutosine-synthesizing protein 2/3/4.